We begin with the raw amino-acid sequence, 305 residues long: Oxidoreductase swnR (305 aa).

Belongs to the NmrA-type oxidoreductase family. Isoflavone reductase subfamily.

The enzyme catalyses L-pipecolate + O2 = L-1-piperideine-6-carboxylate + H2O2 + H(+). It participates in mycotoxin biosynthesis. Its function is as follows. Oxidoreductase; part of the gene cluster that mediates the biosynthesis of swainsonine (SW), a cytotoxic fungal alkaloid and a potential cancer therapy drug. Swainsonine production occurs via a multibranched pathway and is dispensable for fungal colonization of plants and infection of insect hosts. The first step of swainsonine biosynthesis is the production of the precursor pipecolic acid (PA) via conversion of L-lysine (Lys) to 1-piperideine-6-carboxylate (P6C) by the aminotransferase swnA, the latter being further reduced to PA by the reductase swnR. PA can be converted from lysine by both the SW biosynthetic cluster and the unclustered genes such as lysine cyclodeaminase. The PKS-NRPS hybrid synthetase swnK uptakes and condensates PA and malonyl-CoA with and without skipping of the ketoreductase (KR) domain in order to produce 3 intermediates, 1-oxoindolizidine, (1S)-1-hydroxyindolizin, and (1R)-1-hydroxyindolizine; with the transisomer (1S)-1-hydroxyindolizin being predominant. The terminal thioester reductase (TE) domain of swnK is involved in reduction of the thioester bond to release the intermediate aldehydes. The oxidoreductase swnN could contribute to the reduction of 1-oxoindolizidine to (1S)-1-hydroxyindolizin and (1R)-1-hydroxyindolizine, contributing to the major route of SW production. The dioxygenase swnH2 would be responsible for the oxidization of (1R)-1-hydroxyindolizine into (1R,2S)-1,2-dihydroxyindolizine and of (1S)-1-hydroxyindolizin to yield both (1R,2S)-1,2-dihydroxyindolizine and (1S,2S)-1,2-dihydroxyindolizine. The dioxygenase swnH1 then performs the conversion of the 1,2-dihydroxyindolizine epimers to SW. The chain is Oxidoreductase swnR from Metarhizium robertsii (strain ARSEF 23 / ATCC MYA-3075) (Metarhizium anisopliae (strain ARSEF 23)).